The chain runs to 267 residues: Undecaprenyl-diphosphatase (267 aa).

A run of 8 helical transmembrane segments spans residues 1 to 21 (MSYFESFILALIQGFTEFLPI), 39 to 59 (QGLAFDVAVHVGTLAAVVLYF), 83 to 103 (AKLAWLIVLATIPACLFGFVM), 111 to 131 (LRSAWVIATTTIVFGLLLWYV), 149 to 169 (ALFIGLAQAVAIIPGTSRSGA), 189 to 209 (FLMSIPIIVLAGSYLGLKLVT), 218 to 238 (FLLTGIITSFISAYICIHFFL), and 245 to 265 (GMTPFVIYRLVLGVGLFAFLL).

Belongs to the UppP family.

It is found in the cell inner membrane. It carries out the reaction di-trans,octa-cis-undecaprenyl diphosphate + H2O = di-trans,octa-cis-undecaprenyl phosphate + phosphate + H(+). In terms of biological role, catalyzes the dephosphorylation of undecaprenyl diphosphate (UPP). Confers resistance to bacitracin. This chain is Undecaprenyl-diphosphatase, found in Vibrio cholerae serotype O1 (strain ATCC 39315 / El Tor Inaba N16961).